We begin with the raw amino-acid sequence, 340 residues long: tRNA N6-adenosine threonylcarbamoyltransferase (340 aa).

The Fe cation site is built by H113 and H117. Residues 135 to 139 (LVSGG), D169, G182, D186, and N274 each bind substrate. D302 contacts Fe cation.

It belongs to the KAE1 / TsaD family. Fe(2+) serves as cofactor.

It is found in the cytoplasm. The enzyme catalyses L-threonylcarbamoyladenylate + adenosine(37) in tRNA = N(6)-L-threonylcarbamoyladenosine(37) in tRNA + AMP + H(+). Functionally, required for the formation of a threonylcarbamoyl group on adenosine at position 37 (t(6)A37) in tRNAs that read codons beginning with adenine. Is involved in the transfer of the threonylcarbamoyl moiety of threonylcarbamoyl-AMP (TC-AMP) to the N6 group of A37, together with TsaE and TsaB. TsaD likely plays a direct catalytic role in this reaction. In Mycolicibacterium gilvum (strain PYR-GCK) (Mycobacterium gilvum (strain PYR-GCK)), this protein is tRNA N6-adenosine threonylcarbamoyltransferase.